Here is a 413-residue protein sequence, read N- to C-terminus: Alpha-1-antitrypsin 1-1 (413 aa).

The N-terminal stretch at 1–24 is a signal peptide; that stretch reads MTPSISWGLLLLAGLCCLVPSFLA. N-linked (GlcNAc...) asparagine glycans are attached at residues N64, N101, and N265. Residues 368 to 387 are RCL; it reads AVTVLQMVPMSMPPILRFDH.

The protein belongs to the serpin family.

The protein resides in the secreted. Inhibitor of serine proteases. Its primary target is elastase, but it also has a moderate affinity for plasmin and thrombin. The polypeptide is Alpha-1-antitrypsin 1-1 (Serpina1a) (Mus musculus (Mouse)).